The following is a 573-amino-acid chain: L-lactate dehydrogenase (cytochrome) (573 aa).

Residues 1-73 (MFKSQLRTAT…LYQKDKFISA (73 aa)) constitute a mitochondrion transit peptide. The Cytochrome b5 heme-binding domain occupies 80 to 157 (DIELTPEIVS…PPEKHLGPLV (78 aa)). His-115, His-138, and Tyr-208 together coordinate heme b. Residues 182-542 (PPLSQMINLH…TPELLDTRSI (361 aa)) enclose the FMN hydroxy acid dehydrogenase domain. Tyr-208 serves as a coordination point for pyruvate. Residues 260-263 (SATA), Ser-290, and Gln-313 contribute to the FMN site. Tyr-315 contacts pyruvate. Position 341 (Thr-341) interacts with FMN. Lys-357 is a binding site for heme b. Residue Lys-408 participates in FMN binding. Pyruvate-binding residues include His-432 and Arg-435. Residues 468 to 472 (DGGVR) and 491 to 492 (GR) contribute to the FMN site.

In the N-terminal section; belongs to the cytochrome b5 family. The protein in the C-terminal section; belongs to the FMN-dependent alpha-hydroxy acid dehydrogenase family. In terms of assembly, homotetramer. FMN is required as a cofactor. The cofactor is heme b.

It is found in the mitochondrion intermembrane space. It carries out the reaction (S)-lactate + 2 Fe(III)-[cytochrome c] = 2 Fe(II)-[cytochrome c] + pyruvate + 2 H(+). Its function is as follows. Catalyzes the oxidation of (S)-lactate (L-lactate) to pyruvate with subsequent transfer of electrons to cytochrome c. Is involved in the utilization of (S)-lactate as a sole source of carbon for growth. This chain is L-lactate dehydrogenase (cytochrome) (CYB2), found in Wickerhamomyces anomalus (Yeast).